A 472-amino-acid chain; its full sequence is Citrate synthase, mitochondrial (472 aa).

Active-site residues include His-308, His-354, and Asp-409.

Belongs to the citrate synthase family. In terms of assembly, homodimer.

The protein resides in the mitochondrion matrix. The enzyme catalyses oxaloacetate + acetyl-CoA + H2O = citrate + CoA + H(+). It functions in the pathway carbohydrate metabolism; tricarboxylic acid cycle; isocitrate from oxaloacetate: step 1/2. This Daucus carota (Wild carrot) protein is Citrate synthase, mitochondrial (CS).